The following is a 502-amino-acid chain: Cytochrome P450 71B16 (502 aa).

Residues 1-21 (MAISLLCLFLITLVSLIFVVK) form a helical membrane-spanning segment. Cysteine 444 is a heme binding site.

It belongs to the cytochrome P450 family. It depends on heme as a cofactor.

Its subcellular location is the membrane. This chain is Cytochrome P450 71B16 (CYP71B16), found in Arabidopsis thaliana (Mouse-ear cress).